Consider the following 71-residue polypeptide: Phenoloxidase 3 (71 aa).

Cu cation-binding residues include histidine 3 and histidine 29.

It belongs to the tyrosinase family. The cofactor is Cu(2+). Post-translationally, upon activation, a trypsin type protease cleaves prophenol oxidase to yield the active enzyme. Hemocytes and plasma.

Its subcellular location is the secreted. The enzyme catalyses 2 L-dopa + O2 = 2 L-dopaquinone + 2 H2O. It catalyses the reaction L-tyrosine + O2 = L-dopaquinone + H2O. In terms of biological role, this is a copper-containing oxidase that functions in the formation of pigments such as melanins and other polyphenolic compounds. Catalyzes the rate-limiting conversions of tyrosine to DOPA, DOPA to DOPA-quinone and possibly 5,6 dihydroxyindole to indole-5'6 quinone. The polypeptide is Phenoloxidase 3 (Sarcophaga argyrostoma (Flesh fly)).